The following is a 413-amino-acid chain: Tyrosine--tRNA ligase (413 aa).

A 'HIGH' region motif is present at residues 59 to 68; sequence PTAPDIHLGH. The short motif at 243–247 is the 'KMSKS' region element; it reads KMSKS. Residue lysine 246 participates in ATP binding. The 61-residue stretch at 351 to 411 folds into the S4 RNA-binding domain; the sequence is LAIGQLLKQA…GKRRFARVTL (61 aa).

Belongs to the class-I aminoacyl-tRNA synthetase family. TyrS type 2 subfamily. In terms of assembly, homodimer.

It is found in the cytoplasm. The enzyme catalyses tRNA(Tyr) + L-tyrosine + ATP = L-tyrosyl-tRNA(Tyr) + AMP + diphosphate + H(+). Functionally, catalyzes the attachment of tyrosine to tRNA(Tyr) in a two-step reaction: tyrosine is first activated by ATP to form Tyr-AMP and then transferred to the acceptor end of tRNA(Tyr). In Burkholderia pseudomallei (strain K96243), this protein is Tyrosine--tRNA ligase.